Reading from the N-terminus, the 146-residue chain is uncharacterized protein (146 aa).

One can recognise an HTH marR-type domain in the interval 9 to 141 (VADIEKSLRH…FEKSLMKLQH (133 aa)). Residues 55 to 78 (IGELSGKMYLACSTTTDLIDRMQK) constitute a DNA-binding region (H-T-H motif).

This is an uncharacterized protein from Bacillus subtilis (strain 168).